Reading from the N-terminus, the 229-residue chain is DNA polymerase III subunit epsilon (229 aa).

D10 and E12 together coordinate a divalent metal cation. The substrate site is built by D10, E12, E55, and H60. H156 serves as the catalytic Proton acceptor. D161 contacts a divalent metal cation. D161 provides a ligand contact to substrate.

As to quaternary structure, DNA polymerase III contains a core (composed of alpha, epsilon and theta chains) that associates with a tau subunit. This core dimerizes to form the POLIII' complex. PolIII' associates with the gamma complex (composed of gamma, delta, delta', psi and chi chains) and with the beta chain to form the complete DNA polymerase III complex. Mg(2+) serves as cofactor. Mn(2+) is required as a cofactor.

The enzyme catalyses DNA(n) + a 2'-deoxyribonucleoside 5'-triphosphate = DNA(n+1) + diphosphate. In terms of biological role, DNA polymerase III is a complex, multichain enzyme responsible for most of the replicative synthesis in bacteria. The epsilon subunit contain the editing function and is a proofreading 3'-5' exonuclease. The polypeptide is DNA polymerase III subunit epsilon (dnaQ) (Rickettsia prowazekii (strain Madrid E)).